The chain runs to 95 residues: Large ribosomal subunit protein uL23c (95 aa).

This sequence belongs to the universal ribosomal protein uL23 family. As to quaternary structure, part of the 50S ribosomal subunit.

It localises to the plastid. It is found in the chloroplast. Binds to 23S rRNA. In Guillardia theta (Cryptophyte), this protein is Large ribosomal subunit protein uL23c (rpl23).